The following is a 605-amino-acid chain: F-box/WD repeat-containing protein pof1 (605 aa).

The region spanning 107–153 (LDFLSLLPVEISFRILSFLDARSLCQAAQVSKHWKELADDDVIWHRM) is the F-box domain. Over residues 195–212 (GVDQAHESSPVKKAKLDD) the composition is skewed to basic and acidic residues. Residues 195–231 (GVDQAHESSPVKKAKLDDYPTSSNEETISSVKPPSPN) form a disordered region. Polar residues predominate over residues 214-231 (PTSSNEETISSVKPPSPN). Phosphoserine is present on residues Ser229 and Ser232. WD repeat units follow at residues 271 to 299 (GHSD…RLWN), 311 to 339 (GHSS…RIWN), 350 to 379 (HGHT…KLWH), 390 to 420 (GHTG…KIWS), 432 to 460 (AHIG…KQWD), 472 to 500 (GHIE…KVWE), and 510 to 538 (NHSE…YLWL).

A part of the E3 ubiquitin ligase Skp1-Cullin-1-F-box (SCF) complex. Interacts with cul1, skp1 and phosphorylated zip1.

It localises to the nucleus. In terms of biological role, probably recognizes and binds to some phosphorylated proteins and promotes their ubiquitination and degradation. Required for the inactivation of zip1 via ubiquitination. This chain is F-box/WD repeat-containing protein pof1 (pof1), found in Schizosaccharomyces pombe (strain 972 / ATCC 24843) (Fission yeast).